Reading from the N-terminus, the 208-residue chain is Holliday junction resolvase RecU (208 aa).

The Mg(2+) site is built by Thr87, Asp89, Glu102, and Gln121.

This sequence belongs to the RecU family. Requires Mg(2+) as cofactor.

The protein resides in the cytoplasm. The catalysed reaction is Endonucleolytic cleavage at a junction such as a reciprocal single-stranded crossover between two homologous DNA duplexes (Holliday junction).. In terms of biological role, endonuclease that resolves Holliday junction intermediates in genetic recombination. Cleaves mobile four-strand junctions by introducing symmetrical nicks in paired strands. Promotes annealing of linear ssDNA with homologous dsDNA. Required for DNA repair, homologous recombination and chromosome segregation. The protein is Holliday junction resolvase RecU of Staphylococcus aureus (strain Mu3 / ATCC 700698).